Reading from the N-terminus, the 1310-residue chain is Vacuolating cytotoxin autotransporter (1310 aa).

Positions 1-30 are cleaved as a signal peptide; that stretch reads MEIQQTHRKINRPIISLALVGVLMGTELGA. A disordered region spans residues 339 to 364; the sequence is PEGGYESKTKDNPQNNPKNDAQKTEI. Residues 350–364 show a composition bias toward polar residues; that stretch reads NPQNNPKNDAQKTEI. Positions 1038 to 1310 constitute an Autotransporter domain; sequence KYEKPTNVWA…ASNLGMRYSF (273 aa).

The protein localises to the periplasm. It is found in the secreted. The protein resides in the cell surface. It localises to the cell outer membrane. Induces vacuolation of eukaryotic cells. Causes ulceration and gastric lesions. The protein is Vacuolating cytotoxin autotransporter (vacA) of Helicobacter pylori (Campylobacter pylori).